Consider the following 414-residue polypeptide: uncharacterized protein (414 aa).

Belongs to the UbiH/COQ6 family. Requires FAD as cofactor.

This is an uncharacterized protein from Synechocystis sp. (strain ATCC 27184 / PCC 6803 / Kazusa).